The chain runs to 689 residues: SH3 domain-binding protein 1 (689 aa).

Positions 1–11 (MMKRQLHRMRQ) are enriched in basic residues. Positions 1–24 (MMKRQLHRMRQLAHTGSSGRTPET) are disordered. The segment at 1-275 (MMKRQLHRMR…TAAPFSRVYG (275 aa)) is interaction with CGNL1. The 246-residue stretch at 17-262 (SSGRTPETAE…RDNHSQADSS (246 aa)) folds into the BAR domain. 2 positions are modified to phosphoserine: serine 241 and serine 262. Residues 276–469 (VSLRTHLQDL…VLIQNADTLF (194 aa)) form the Rho-GAP domain. The interval 470–689 (PGDINFSVSG…RPRGLISETD (220 aa)) is interaction with CD2AP. The tract at residues 507-689 (TAATPTPTPA…RPRGLISETD (183 aa)) is disordered. Serine 539 and serine 545 each carry phosphoserine. The segment covering 565 to 575 (PARPTMPPPQP) has biased composition (pro residues). Residues 576–594 (SSSRSSPPALSLPAGSVSP) show a composition bias toward low complexity. The residue at position 586 (serine 586) is a Phosphoserine. Threonine 596 carries the phosphothreonine modification. The short motif at 611 to 620 (APTVPPPLPP) is the SH3-binding element. Positions 613-625 (TVPPPLPPAPPQP) are enriched in pro residues. A Phosphoserine modification is found at serine 641. Pro residues predominate over residues 670 to 680 (PPTPVLPPQPR).

As to quaternary structure, interacts with RAC1. Interacts with the exocyst via EXOC4 and EXOC8; required for the localization of both SH3BP1 and the exocyst to the leading edge of migrating cells. Interacts with CD2AP and CGNL1; probably part of a complex at cell junctions. Interacts with CAPZA1; recruits CAPZA1 to forming cell junctions. May interact with AFDN. Interacts with PLXND1; they dissociate upon SEMA3E binding to PLXND1 allowing SH3BP1 to transduce downstream signal through RAC1 inactivation. Interacts with ABL1, GRB2 and SRC (via SH3 domain).

It is found in the cell projection. The protein resides in the cell junction. The protein localises to the tight junction. It localises to the adherens junction. Its subcellular location is the phagocytic cup. It is found in the nucleus. The protein resides in the cytoplasm. The protein localises to the cytosol. GTPase activating protein/GAP which specifically converts GTP-bound Rho-type GTPases including RAC1 and CDC42 in their inactive GDP-bound form. By specifically inactivating RAC1 at the leading edge of migrating cells, it regulates the spatiotemporal organization of cell protrusions which is important for proper cell migration. Also negatively regulates CDC42 in the process of actin remodeling and the formation of epithelial cell junctions. Through its GAP activity toward RAC1 and/or CDC42 plays a specific role in phagocytosis of large particles. Specifically recruited by a PI3 kinase/PI3K-dependent mechanism to sites of large particles engagement, inactivates RAC1 and/or CDC42 allowing the reorganization of the underlying actin cytoskeleton required for engulfment. It also plays a role in angiogenesis and the process of repulsive guidance as part of a semaphorin-plexin signaling pathway. Following the binding of PLXND1 to extracellular SEMA3E it dissociates from PLXND1 and inactivates RAC1, inducing the intracellular reorganization of the actin cytoskeleton and the collapse of cells. This is SH3 domain-binding protein 1 from Rattus norvegicus (Rat).